A 301-amino-acid polypeptide reads, in one-letter code: GTPase Era (301 aa).

Residues 7–175 (YCGFIAIVGR…AGIVRKHLPE (169 aa)) form the Era-type G domain. The interval 15–22 (GRPNVGKS) is G1. Position 15–22 (15–22 (GRPNVGKS)) interacts with GTP. The segment at 41-45 (QTTRH) is G2. Residues 62-65 (DTPG) are G3. GTP is bound by residues 62–66 (DTPGL) and 124–127 (NKVD). A G4 region spans residues 124 to 127 (NKVD). Residues 154–156 (ISA) are G5. The KH type-2 domain occupies 206-283 (LGAELPYSVT…HLELWVKVKS (78 aa)).

This sequence belongs to the TRAFAC class TrmE-Era-EngA-EngB-Septin-like GTPase superfamily. Era GTPase family. Monomer.

It is found in the cytoplasm. Its subcellular location is the cell inner membrane. An essential GTPase that binds both GDP and GTP, with rapid nucleotide exchange. Plays a role in 16S rRNA processing and 30S ribosomal subunit biogenesis and possibly also in cell cycle regulation and energy metabolism. The polypeptide is GTPase Era (Salmonella agona (strain SL483)).